A 208-amino-acid chain; its full sequence is FMN-dependent NADH:quinone oxidoreductase (208 aa).

FMN contacts are provided by residues 17-19 (SNS), 99-102 (MWNL), and 143-146 (SRGG).

The protein belongs to the azoreductase type 1 family. In terms of assembly, homodimer. FMN serves as cofactor.

It catalyses the reaction 2 a quinone + NADH + H(+) = 2 a 1,4-benzosemiquinone + NAD(+). It carries out the reaction N,N-dimethyl-1,4-phenylenediamine + anthranilate + 2 NAD(+) = 2-(4-dimethylaminophenyl)diazenylbenzoate + 2 NADH + 2 H(+). Its function is as follows. Quinone reductase that provides resistance to thiol-specific stress caused by electrophilic quinones. Functionally, also exhibits azoreductase activity. Catalyzes the reductive cleavage of the azo bond in aromatic azo compounds to the corresponding amines. This is FMN-dependent NADH:quinone oxidoreductase from Staphylococcus aureus (strain Mu50 / ATCC 700699).